Here is a 427-residue protein sequence, read N- to C-terminus: Phosphoribosylamine--glycine ligase (427 aa).

An ATP-grasp domain is found at 107–312; that stretch reads KDLCARFNIP…LLALVNAAVD (206 aa). Residue 133-193 coordinates ATP; sequence IRQQGAPIVV…EEFLDGEEAS (61 aa). The Mg(2+) site is built by Glu-282 and Asn-284.

Belongs to the GARS family. Requires Mg(2+) as cofactor. Mn(2+) serves as cofactor.

The enzyme catalyses 5-phospho-beta-D-ribosylamine + glycine + ATP = N(1)-(5-phospho-beta-D-ribosyl)glycinamide + ADP + phosphate + H(+). It participates in purine metabolism; IMP biosynthesis via de novo pathway; N(1)-(5-phospho-D-ribosyl)glycinamide from 5-phospho-alpha-D-ribose 1-diphosphate: step 2/2. The chain is Phosphoribosylamine--glycine ligase from Brucella melitensis biotype 1 (strain ATCC 23456 / CCUG 17765 / NCTC 10094 / 16M).